The chain runs to 284 residues: Zinc finger protein ZAT3 (284 aa).

A compositionally biased stretch (basic and acidic residues) spans 1-12 (MNNNHSYDDRSF). The disordered stretch occupies residues 1 to 76 (MNNNHSYDDR…KPDPNAPKIT (76 aa)). A compositionally biased stretch (polar residues) spans 18 to 37 (PSNTSNPNPNLQFALSSSYD). Residues 47 to 62 (TVASSSSSSPKSASKP) show a composition bias toward low complexity. 3 consecutive C2H2-type zinc fingers follow at residues 77–99 (RPCT…MRCH), 162–184 (FECG…RASH), and 222–244 (HKCN…MRCH).

In terms of assembly, interacts (via the EAR motif) with TPL. Expressed exclusively in pollen.

It is found in the nucleus. Its function is as follows. Mediates the regulation of male germ cell division by DUO1. The protein is Zinc finger protein ZAT3 of Arabidopsis thaliana (Mouse-ear cress).